The sequence spans 393 residues: Telomeric repeat-binding factor 2-interacting protein 1 (393 aa).

Ala-2 is modified (N-acetylalanine). In terms of domain architecture, BRCT spans 10–101 (DPNGPTHSST…EKLELEAYRL (92 aa)). Phosphoserine occurs at positions 36 and 43. Positions 104–132 (TEQASDPKPGASAEGSTEPEPQPLTGRIA) are disordered. Lys-111 is covalently cross-linked (Glycyl lysine isopeptide (Lys-Gly) (interchain with G-Cter in SUMO2)). A Myb-like domain is found at 125-185 (QPLTGRIAYT…SLKDRYLKHL (61 aa)). Ser-151 and Ser-153 each carry phosphoserine. Lys-191 is covalently cross-linked (Glycyl lysine isopeptide (Lys-Gly) (interchain with G-Cter in SUMO2)). 2 disordered regions span residues 194–248 (LGNA…EADN) and 272–305 (HITM…TQEV). Residues Ser-200 and Ser-203 each carry the phosphoserine modification. Residues Lys-205, Lys-209, and Lys-237 each participate in a glycyl lysine isopeptide (Lys-Gly) (interchain with G-Cter in SUMO2) cross-link. The span at 223-248 (QNKRTPDLPEEECVKGETKENGEADN) shows a compositional bias: basic and acidic residues. Over residues 282-297 (TPEEDSETQPDEEEEE) the composition is skewed to acidic residues. Lys-366 participates in a covalent cross-link: Glycyl lysine isopeptide (Lys-Gly) (interchain with G-Cter in SUMO2). The Nuclear localization signal signature appears at 377 to 393 (KKYGAQNVARRIEFRKK).

Belongs to the RAP1 family. In terms of assembly, associates with the I-kappa-B-kinase (IKK) core complex, composed of CHUK, IKBKB and IKBKG. Homodimer. Component of the shelterin complex (telosome) composed of TERF1, TERF2, TINF2, TERF2IP ACD and POT1. Interacts with TERF2 (but not TERF1) with its C-terminus. Interacts with SLX4/BTBD12. Interacts with TERF2; the interaction is direct.

It is found in the nucleus. The protein resides in the cytoplasm. Its subcellular location is the chromosome. It localises to the telomere. Acts both as a regulator of telomere function and as a transcription regulator. Involved in the regulation of telomere length and protection as a component of the shelterin complex (telosome). In contrast to other components of the shelterin complex, it is dispensible for telomere capping and does not participate in the protection of telomeres against non-homologous end-joining (NHEJ)-mediated repair. Instead, it is required to negatively regulate telomere recombination and is essential for repressing homology-directed repair (HDR), which can affect telomere length. Does not bind DNA directly: recruited to telomeric double-stranded 5'-TTAGGG-3' repeats via its interaction with TERF2. Independently of its function in telomeres, also acts as a transcription regulator: recruited to extratelomeric 5'-TTAGGG-3' sites via its association with TERF2 or other factors, and regulates gene expression. When cytoplasmic, associates with the I-kappa-B-kinase (IKK) complex and acts as a regulator of the NF-kappa-B signaling by promoting IKK-mediated phosphorylation of RELA/p65, leading to activate expression of NF-kappa-B target genes. The chain is Telomeric repeat-binding factor 2-interacting protein 1 (Terf2ip) from Rattus norvegicus (Rat).